Reading from the N-terminus, the 152-residue chain is Large ribosomal subunit protein uL15 (152 aa).

Positions glycine 31–methionine 58 are disordered.

Belongs to the universal ribosomal protein uL15 family. Part of the 50S ribosomal subunit.

Functionally, binds to the 23S rRNA. In Parasynechococcus marenigrum (strain WH8102), this protein is Large ribosomal subunit protein uL15.